A 109-amino-acid chain; its full sequence is MKKNTHPEYRQVLFVDSSTGYKFVCGSTYQSEKTEVFEGKEYPVCYVSVSSSSHPFFTGSKKFVDAEGRVDKFLKRYSNVRQPAQQPQPEEDALPAAKGKKKVVTKKKK.

The segment at 79–109 is disordered; sequence NVRQPAQQPQPEEDALPAAKGKKKVVTKKKK. Basic residues predominate over residues 98 to 109; that stretch reads KGKKKVVTKKKK.

The protein belongs to the bacterial ribosomal protein bL31 family. Type B subfamily. As to quaternary structure, part of the 50S ribosomal subunit.

This Chlamydia pneumoniae (Chlamydophila pneumoniae) protein is Large ribosomal subunit protein bL31B.